The sequence spans 210 residues: Uracil phosphoribosyltransferase (210 aa).

5-phospho-alpha-D-ribose 1-diphosphate-binding positions include Arg78, Arg103, and 130–138; that span reads DPMLATGGT. Residues Ile193 and 198–200 contribute to the uracil site; that span reads GDA. 5-phospho-alpha-D-ribose 1-diphosphate is bound at residue Asp199.

It belongs to the UPRTase family. Mg(2+) serves as cofactor.

The catalysed reaction is UMP + diphosphate = 5-phospho-alpha-D-ribose 1-diphosphate + uracil. The protein operates within pyrimidine metabolism; UMP biosynthesis via salvage pathway; UMP from uracil: step 1/1. With respect to regulation, allosterically activated by GTP. Functionally, catalyzes the conversion of uracil and 5-phospho-alpha-D-ribose 1-diphosphate (PRPP) to UMP and diphosphate. The sequence is that of Uracil phosphoribosyltransferase from Xanthomonas euvesicatoria pv. vesicatoria (strain 85-10) (Xanthomonas campestris pv. vesicatoria).